We begin with the raw amino-acid sequence, 85 residues long: MVKLRLKRCGRKQRAAVYRIIAIDVRSRREGRDLRKVGFYDPIKNQTYLNVPAILYFLEKGAQPTGTVHDILKKAGVFTELHLNQ.

Belongs to the bacterial ribosomal protein bS16 family.

Its subcellular location is the plastid. The protein localises to the chloroplast. In Cucumis sativus (Cucumber), this protein is Small ribosomal subunit protein bS16c.